A 290-amino-acid chain; its full sequence is MLKTIQDKAKHRTRPLWAWLKLLWQRIDEDNMTTLAGNLAYVSLLSLVPLVAVVFALFAAFPMFSDVSIQLRHFIFANFLPATGDVIQRYIEQFVANSNKMTAVGACGLIVTALLLMYSIDSALNTIWRSKRARPKIYSFAVYWMILTLGPLLAGASLAISSYLLSLRWASDLNTVIDNVLRIFPLLLSWISFWLLYSIVPTIRVPNRDAIVGAFVAALLFEAGKKGFALYITMFPSYQLIYGVLAVIPILFVWVYWTWCIVLLGAEITVTLGEYRKLKQAAEQEEDDEP.

The next 6 helical transmembrane spans lie at 44–64 (LLSLVPLVAVVFALFAAFPMF), 104–124 (VGACGLIVTALLLMYSIDSAL), 140–160 (FAVYWMILTLGPLLAGASLAI), 183–203 (IFPLLLSWISFWLLYSIVPTI), 210–230 (AIVGAFVAALLFEAGKKGFAL), and 244–264 (VLAVIPILFVWVYWTWCIVLL).

This sequence belongs to the UPF0761 family.

It localises to the cell inner membrane. The polypeptide is UPF0761 membrane protein YihY (Escherichia coli O127:H6 (strain E2348/69 / EPEC)).